We begin with the raw amino-acid sequence, 517 residues long: Crotonobetaine/carnitine--CoA ligase (517 aa).

This sequence belongs to the ATP-dependent AMP-binding enzyme family.

It carries out the reaction 4-(trimethylamino)butanoate + ATP + CoA = 4-(trimethylamino)butanoyl-CoA + AMP + diphosphate. The catalysed reaction is crotonobetaine + ATP + CoA = crotonobetainyl-CoA + AMP + diphosphate. It catalyses the reaction (R)-carnitine + ATP + CoA = (R)-carnitinyl-CoA + AMP + diphosphate. Its pathway is amine and polyamine metabolism; carnitine metabolism. In terms of biological role, catalyzes the transfer of CoA to carnitine, generating the initial carnitinyl-CoA needed for the CaiB reaction cycle. Also has activity toward crotonobetaine and gamma-butyrobetaine. This Salmonella agona (strain SL483) protein is Crotonobetaine/carnitine--CoA ligase.